The primary structure comprises 377 residues: Nitric oxide reductase FlRd-NAD(+) reductase (377 aa).

The protein belongs to the FAD-dependent oxidoreductase family. FAD is required as a cofactor.

The protein resides in the cytoplasm. It carries out the reaction 2 reduced [nitric oxide reductase rubredoxin domain] + NAD(+) + H(+) = 2 oxidized [nitric oxide reductase rubredoxin domain] + NADH. The protein operates within nitrogen metabolism; nitric oxide reduction. Its function is as follows. One of at least two accessory proteins for anaerobic nitric oxide (NO) reductase. Reduces the rubredoxin moiety of NO reductase. The chain is Nitric oxide reductase FlRd-NAD(+) reductase from Klebsiella pneumoniae subsp. pneumoniae (strain ATCC 700721 / MGH 78578).